A 103-amino-acid polypeptide reads, in one-letter code: Large ribosomal subunit protein bL21 (103 aa).

The protein belongs to the bacterial ribosomal protein bL21 family. Part of the 50S ribosomal subunit. Contacts protein L20.

Its function is as follows. This protein binds to 23S rRNA in the presence of protein L20. This chain is Large ribosomal subunit protein bL21, found in Clostridium beijerinckii (strain ATCC 51743 / NCIMB 8052) (Clostridium acetobutylicum).